A 1034-amino-acid chain; its full sequence is Condensin complex subunit 3 (1034 aa).

7 HEAT repeats span residues 95-132, 139-176, 178-213, 242-279, 281-317, 439-476, and 618-655; these read SPVN…NLPE, DLFD…PSDP, CPVS…SLPK, LTIA…QYSE, DVLD…LVQN, TSLI…PIVT, and DFAR…LFGM. Positions 663-672 are enriched in polar residues; sequence TNPDDSQCKA. The disordered stretch occupies residues 663-693; the sequence is TNPDDSQCKAQENADEDISEQEKPGSVDENL. 3 HEAT repeats span residues 703 to 740, 785 to 823, and 878 to 915; these read ATVN…SGRL, CFAE…DLTR, and ENST…SGRE. Residues 909-949 show a composition bias toward basic and acidic residues; sequence QLRSGREEHRVSKETEPQVSKETEDRTNLQENEEGKQKDEA. Residues 909-1034 are disordered; sequence QLRSGREEHR…LSKLLNEEAN (126 aa). Residues 964–984 show a composition bias toward basic residues; it reads RGKATKGRRKGPAAAATRRKA. The span at 985-999 shows a compositional bias: basic and acidic residues; that stretch reads SKAEEAEAEMERQEE.

It belongs to the CND3 (condensin subunit 3) family. In terms of assembly, component of the condensin complex, which contains the XCAP-E/SMC2 and XCAP-C/SMC4 heterodimer, and three non SMC subunits that probably regulate the complex: XCAP-H/NCAPH, XCAP-D2/NCAPD2 and XCAP-G/NCAPG. Phosphorylated by cdk1. Its phosphorylation, as well as that of XCAP-D2 and XCAP-H subunits, activates the condensin complex and is required for chromosome condensation.

Its subcellular location is the nucleus. The protein resides in the cytoplasm. It is found in the chromosome. In terms of biological role, regulatory subunit of the condensin complex, a complex required for conversion of interphase chromatin into mitotic-like condense chromosomes. The condensin complex probably introduces positive supercoils into relaxed DNA in the presence of type I topoisomerases and converts nicked DNA into positive knotted forms in the presence of type II topoisomerase. In Xenopus laevis (African clawed frog), this protein is Condensin complex subunit 3 (ncapg).